A 574-amino-acid polypeptide reads, in one-letter code: Methionine--tRNA ligase (574 aa).

The 'HIGH' region signature appears at 11 to 21 (PYINGIKHLGN). 4 residues coordinate Zn(2+): Cys143, Cys146, Cys156, and Cys159. Positions 345–349 (KFSTS) match the 'KMSKS' region motif. Residue Thr348 participates in ATP binding.

Belongs to the class-I aminoacyl-tRNA synthetase family. MetG type 1 subfamily. As to quaternary structure, monomer. Requires Zn(2+) as cofactor.

It localises to the cytoplasm. It catalyses the reaction tRNA(Met) + L-methionine + ATP = L-methionyl-tRNA(Met) + AMP + diphosphate. Functionally, is required not only for elongation of protein synthesis but also for the initiation of all mRNA translation through initiator tRNA(fMet) aminoacylation. The chain is Methionine--tRNA ligase from Streptomyces avermitilis (strain ATCC 31267 / DSM 46492 / JCM 5070 / NBRC 14893 / NCIMB 12804 / NRRL 8165 / MA-4680).